The sequence spans 204 residues: Large ribosomal subunit protein eL15 (204 aa).

It belongs to the eukaryotic ribosomal protein eL15 family. Component of the large ribosomal subunit.

The protein localises to the cytoplasm. Its function is as follows. Component of the large ribosomal subunit. The ribosome is a large ribonucleoprotein complex responsible for the synthesis of proteins in the cell. The chain is Large ribosomal subunit protein eL15 (rpl15) from Mylopharyngodon piceus (Black carp).